The chain runs to 303 residues: Bifunctional protein FolD 2 (303 aa).

Residues 169 to 171 (GRS), S194, and I235 contribute to the NADP(+) site.

It belongs to the tetrahydrofolate dehydrogenase/cyclohydrolase family. In terms of assembly, homodimer.

The enzyme catalyses (6R)-5,10-methylene-5,6,7,8-tetrahydrofolate + NADP(+) = (6R)-5,10-methenyltetrahydrofolate + NADPH. It carries out the reaction (6R)-5,10-methenyltetrahydrofolate + H2O = (6R)-10-formyltetrahydrofolate + H(+). The protein operates within one-carbon metabolism; tetrahydrofolate interconversion. In terms of biological role, catalyzes the oxidation of 5,10-methylenetetrahydrofolate to 5,10-methenyltetrahydrofolate and then the hydrolysis of 5,10-methenyltetrahydrofolate to 10-formyltetrahydrofolate. The sequence is that of Bifunctional protein FolD 2 from Ectopseudomonas mendocina (strain ymp) (Pseudomonas mendocina).